The following is a 555-amino-acid chain: Sesquiterpene synthase 31 (555 aa).

Mg(2+) is bound by residues Asp-308, Asp-312, Asp-451, Thr-455, and Glu-459. Positions 308–312 (DDTFD) match the DDXXD motif motif.

Belongs to the terpene synthase family. Tpsa subfamily. The cofactor is Mg(2+). It depends on Mn(2+) as a cofactor. As to expression, expressed in stem and leaf trichomes. Detected in roots, fruits and flowers.

It localises to the cytoplasm. The enzyme catalyses (2E,6E)-farnesyl diphosphate = viridiflorene + diphosphate. It functions in the pathway secondary metabolite biosynthesis; terpenoid biosynthesis. In terms of biological role, sesquiterpene synthase involved in the production of viridiflorene from (E,E)-farnesyl diphosphate (FPP). Has no activity with (Z,Z)-FPP. Can act with a low efficiency as a monoterpene synthase with geranyl diphosphate as substrate. This Solanum lycopersicum (Tomato) protein is Sesquiterpene synthase 31.